We begin with the raw amino-acid sequence, 335 residues long: GTPase Obg (335 aa).

The 159-residue stretch at 1–159 (MKFVDSAKIS…IELEMELKLM (159 aa)) folds into the Obg domain. An OBG-type G domain is found at 160 to 323 (ADVGLVGFPN…LKDELWRQIS (164 aa)). GTP is bound by residues 166-173 (GFPNAGKS), 191-195 (FTTLV), 213-216 (DIPG), 280-283 (TKMD), and 304-306 (SSV). The Mg(2+) site is built by S173 and T193.

It belongs to the TRAFAC class OBG-HflX-like GTPase superfamily. OBG GTPase family. In terms of assembly, monomer. Mg(2+) is required as a cofactor.

It localises to the cytoplasm. In terms of biological role, an essential GTPase which binds GTP, GDP and possibly (p)ppGpp with moderate affinity, with high nucleotide exchange rates and a fairly low GTP hydrolysis rate. Plays a role in control of the cell cycle, stress response, ribosome biogenesis and in those bacteria that undergo differentiation, in morphogenesis control. This chain is GTPase Obg, found in Chlorobaculum parvum (strain DSM 263 / NCIMB 8327) (Chlorobium vibrioforme subsp. thiosulfatophilum).